Reading from the N-terminus, the 223-residue chain is Serine/threonine/tyrosine-interacting protein (223 aa).

The Tyrosine-protein phosphatase domain occupies 28–176 (EMQEILPGLF…LQEYEAIYLA (149 aa)). Residues 76–78 (FQQ) carry the Interaction with FBXW7 motif. Phosphoserine is present on residues Ser184, Ser193, and Ser201. Residues 197 to 223 (GTTGSLKRTHEEEDDFGTMQVATAQNG) form a disordered region.

It belongs to the protein-tyrosine phosphatase family. Non-receptor class subfamily. In terms of assembly, interacts with MAPK1; independently of MAPK1 phosphorylation status. Interacts with CARHSP1/Crhsp-24. Interacts (via FQQ motif) with FBXW7 isoforms 1 (via F-box domain) and 3 (via F-box domain); the interaction is direct and prevents FBXW7 interaction with SKP1, a component of the SCF(FBXW7) complex. Does not interact with FBXW7 isoform 2.

It is found in the nucleus. The protein localises to the cytoplasm. The protein resides in the cytosol. Catalytically inactive phosphatase. Acts as a nuclear anchor for MAPK1/MAPK3 (ERK1/ERK2). Modulates cell-fate decisions and cell migration by spatiotemporal regulation of MAPK1/MAPK3 (ERK1/ERK2). By binding to the F-box of FBXW7, prevents the assembly of FBXW7 into the SCF E3 ubiquitin-protein ligase complex, and thereby inhibits degradation of its substrates. Plays a role in spermatogenesis. The sequence is that of Serine/threonine/tyrosine-interacting protein from Homo sapiens (Human).